Consider the following 387-residue polypeptide: Proteinase R (387 aa).

The N-terminal stretch at Met1 to Ala21 is a signal peptide. A propeptide spanning residues Val22–Asn108 is cleaved from the precursor. The Inhibitor I9 domain occupies Lys42–Ile107. The Peptidase S8 domain maps to Pro115–Gly387. Residue Thr124 participates in Ca(2+) binding. Cystine bridges form between Cys142/Cys231 and Cys286/Cys357. Catalysis depends on charge relay system residues Asp147 and His177. Asp308 is a Ca(2+) binding site. Ser332 functions as the Charge relay system in the catalytic mechanism. Asp368 lines the Ca(2+) pocket.

It belongs to the peptidase S8 family. It depends on Ca(2+) as a cofactor.

In terms of biological role, serine proteinase. The sequence is that of Proteinase R (PROR) from Parengyodontium album (Tritirachium album).